The primary structure comprises 224 residues: LexA repressor (224 aa).

The H-T-H motif DNA-binding region spans 31–51; the sequence is RAEIAAEFGFKSANAAEEHLQ. Active-site for autocatalytic cleavage activity residues include Ser-142 and Lys-179.

This sequence belongs to the peptidase S24 family. In terms of assembly, homodimer.

The enzyme catalyses Hydrolysis of Ala-|-Gly bond in repressor LexA.. Functionally, represses a number of genes involved in the response to DNA damage (SOS response), including recA and lexA. In the presence of single-stranded DNA, RecA interacts with LexA causing an autocatalytic cleavage which disrupts the DNA-binding part of LexA, leading to derepression of the SOS regulon and eventually DNA repair. In Paracidovorax citrulli (strain AAC00-1) (Acidovorax citrulli), this protein is LexA repressor.